A 406-amino-acid polypeptide reads, in one-letter code: Propionate kinase (406 aa).

Residues Asn11 and Lys18 each coordinate ATP. Position 11 (Asn11) interacts with Mg(2+). Arg86 provides a ligand contact to substrate. The active-site Proton donor/acceptor is the Asp143. ATP-binding positions include His175, 203–207 (HLGNG), 278–280 (DMR), and 326–330 (GIGEN).

It belongs to the acetokinase family. TdcD subfamily. As to quaternary structure, homodimer. It depends on Mg(2+) as a cofactor.

The enzyme catalyses propanoate + ATP = propanoyl phosphate + ADP. Its pathway is amino-acid degradation; L-threonine degradation via propanoate pathway; propanoate from L-threonine: step 4/4. In terms of biological role, catalyzes the conversion of propionyl phosphate and ADP to propionate and ATP. The protein is Propionate kinase of Yersinia enterocolitica serotype O:8 / biotype 1B (strain NCTC 13174 / 8081).